A 167-amino-acid chain; its full sequence is Stress-related protein (167 aa).

This sequence belongs to the REF/SRPP family.

Its function is as follows. Plays a role in plant defense. The protein is Stress-related protein (SRP) of Phaseolus vulgaris (Kidney bean).